We begin with the raw amino-acid sequence, 171 residues long: ATP synthase subunit b (171 aa).

Residues 4–24 (IAFFVICVGFPSLIFASASIQ) traverse the membrane as a helical segment.

The protein belongs to the ATPase B chain family. F-type ATPases have 2 components, F(1) - the catalytic core - and F(0) - the membrane proton channel. F(1) has five subunits: alpha(3), beta(3), gamma(1), delta(1), epsilon(1). F(0) has three main subunits: a(1), b(2) and c(10-14). The alpha and beta chains form an alternating ring which encloses part of the gamma chain. F(1) is attached to F(0) by a central stalk formed by the gamma and epsilon chains, while a peripheral stalk is formed by the delta and b chains.

The protein resides in the cell inner membrane. Its function is as follows. F(1)F(0) ATP synthase produces ATP from ADP in the presence of a proton or sodium gradient. F-type ATPases consist of two structural domains, F(1) containing the extramembraneous catalytic core and F(0) containing the membrane proton channel, linked together by a central stalk and a peripheral stalk. During catalysis, ATP synthesis in the catalytic domain of F(1) is coupled via a rotary mechanism of the central stalk subunits to proton translocation. Component of the F(0) channel, it forms part of the peripheral stalk, linking F(1) to F(0). The protein is ATP synthase subunit b of Helicobacter hepaticus (strain ATCC 51449 / 3B1).